Consider the following 298-residue polypeptide: Acetylglutamate kinase (298 aa).

Substrate is bound by residues 69–70, arginine 91, and asparagine 191; that span reads GG.

The protein belongs to the acetylglutamate kinase family. ArgB subfamily.

The protein localises to the cytoplasm. It carries out the reaction N-acetyl-L-glutamate + ATP = N-acetyl-L-glutamyl 5-phosphate + ADP. Its pathway is amino-acid biosynthesis; L-arginine biosynthesis; N(2)-acetyl-L-ornithine from L-glutamate: step 2/4. In terms of biological role, catalyzes the ATP-dependent phosphorylation of N-acetyl-L-glutamate. The protein is Acetylglutamate kinase of Neisseria meningitidis serogroup A / serotype 4A (strain DSM 15465 / Z2491).